The primary structure comprises 415 residues: MAAIINQRVEQGESSMGGAKPALLHRITGHVARINDVILLSKDEGVWTASDDRSVRLYLKRDNDQFWPSIHHFMPVAPTSLYYSEETYKLLVGLINGNVYEFSVADDFNSMTESRKWTCHAGPISGLGFALSSELIFSCSRDKSIVWHCSENSNKMGSYLLENSCTAMVIDLPFVFVGDHGGHVTVLRIVDNQPNLVSKLSAHTNAITSLTWDGNKKVLYSGSSDHLIIMWDIGGGRGEAYELNGHNGKVTTLCAAPAAKRLFSADEHGKLMCWDMNCKRVETPEWKTSDCCQKCNQPFFWNLQAMWQRKVVGLRQHHCRTCGSAVCGSCCDNWTTYPPMGYETKIRICNDCNARMKDNPQNFNLTPLAIPHEIHTGITAMHLQETLGLLVTSGQNRVIMIWDVRSVCSAPSGSQ.

WD repeat units follow at residues 71–103 (HHFMPVAPTSLYYSEETYKLLVGLINGNVYEFS), 119–148 (CHAGPISGLGFALSSELIFSCSRDKSIVWH), 202–232 (AHTNAITSLTWDGNKKVLYSGSSDHLIIMWD), and 245–284 (GHNGKVTTLCAAPAAKRLFSADEHGKLMCWDMNCKRVETP). The FYVE-type zinc finger occupies 286–357 (WKTSDCCQKC…ICNDCNARMK (72 aa)). Residues Cys-292, Cys-295, Cys-319, Cys-322, Cys-327, Cys-330, Cys-349, and Cys-352 each contribute to the Zn(2+) site. The WD 5 repeat unit spans residues 373 to 403 (EIHTGITAMHLQETLGLLVTSGQNRVIMIWD).

Its function is as follows. Plays a role in coelomocyte endocytosis. This Caenorhabditis elegans protein is WD repeat and FYVE domain-containing protein 2 (wdfy-2).